Reading from the N-terminus, the 217-residue chain is Outer-membrane lipoprotein LolB (217 aa).

Positions 1-20 (MSKALRTLALSGLVLVGLSA) are cleaved as a signal peptide. Cysteine 21 is lipidated: N-palmitoyl cysteine. Cysteine 21 carries the S-diacylglycerol cysteine lipid modification.

This sequence belongs to the LolB family. Monomer.

The protein localises to the cell outer membrane. Plays a critical role in the incorporation of lipoproteins in the outer membrane after they are released by the LolA protein. The polypeptide is Outer-membrane lipoprotein LolB (Xanthomonas oryzae pv. oryzae (strain MAFF 311018)).